The primary structure comprises 404 residues: L-cysteine:1D-myo-inositol 2-amino-2-deoxy-alpha-D-glucopyranoside ligase (404 aa).

The tract at residues 1-20 (MRTWPTPDVPPLPRTGAPAP) is disordered. Residue Cys-45 participates in Zn(2+) binding. Residues 45-48 (CGIT), Thr-60, and 83-85 (NVT) each bind L-cysteinyl-5'-AMP. The 'HIGH' region motif lies at 47 to 57 (ITPYDATHLGH). A 'ERGGDP' region motif is present at residues 185 to 190 (ERGGDP). The disordered stretch occupies residues 185–216 (ERGGDPDRPGKKHPLDPALWRGEQPGEPSWDG). Residues 186–199 (RGGDPDRPGKKHPL) are compositionally biased toward basic and acidic residues. Trp-226 contacts L-cysteinyl-5'-AMP. Cys-230 serves as a coordination point for Zn(2+). Residue 248-250 (GAD) coordinates L-cysteinyl-5'-AMP. Residue His-255 participates in Zn(2+) binding. Leu-280 contributes to the L-cysteinyl-5'-AMP binding site. The 'KMSKS' region signature appears at 286-290 (KMSKS).

The protein belongs to the class-I aminoacyl-tRNA synthetase family. MshC subfamily. In terms of assembly, monomer. The cofactor is Zn(2+).

The enzyme catalyses 1D-myo-inositol 2-amino-2-deoxy-alpha-D-glucopyranoside + L-cysteine + ATP = 1D-myo-inositol 2-(L-cysteinylamino)-2-deoxy-alpha-D-glucopyranoside + AMP + diphosphate + H(+). Catalyzes the ATP-dependent condensation of GlcN-Ins and L-cysteine to form L-Cys-GlcN-Ins. This chain is L-cysteine:1D-myo-inositol 2-amino-2-deoxy-alpha-D-glucopyranoside ligase, found in Xylanimonas cellulosilytica (strain DSM 15894 / JCM 12276 / CECT 5975 / KCTC 9989 / LMG 20990 / NBRC 107835 / XIL07).